Reading from the N-terminus, the 332-residue chain is Phosphate acyltransferase (332 aa).

It belongs to the PlsX family. As to quaternary structure, homodimer. Probably interacts with PlsY.

The protein resides in the cytoplasm. It carries out the reaction a fatty acyl-[ACP] + phosphate = an acyl phosphate + holo-[ACP]. Its pathway is lipid metabolism; phospholipid metabolism. Functionally, catalyzes the reversible formation of acyl-phosphate (acyl-PO(4)) from acyl-[acyl-carrier-protein] (acyl-ACP). This enzyme utilizes acyl-ACP as fatty acyl donor, but not acyl-CoA. This is Phosphate acyltransferase from Clostridium novyi (strain NT).